Consider the following 100-residue polypeptide: Small ribosomal subunit protein uS14c (100 aa).

This sequence belongs to the universal ribosomal protein uS14 family. In terms of assembly, part of the 30S ribosomal subunit.

The protein localises to the plastid. The protein resides in the chloroplast. In terms of biological role, binds 16S rRNA, required for the assembly of 30S particles. The sequence is that of Small ribosomal subunit protein uS14c from Capsella bursa-pastoris (Shepherd's purse).